A 244-amino-acid chain; its full sequence is Phosphoadenosine 5'-phosphosulfate reductase (244 aa).

Residue cysteine 239 is the Nucleophile; cysteine thiosulfonate intermediate of the active site.

This sequence belongs to the PAPS reductase family. CysH subfamily.

It localises to the cytoplasm. The catalysed reaction is [thioredoxin]-disulfide + sulfite + adenosine 3',5'-bisphosphate + 2 H(+) = [thioredoxin]-dithiol + 3'-phosphoadenylyl sulfate. It participates in sulfur metabolism; hydrogen sulfide biosynthesis; sulfite from sulfate: step 3/3. Its function is as follows. Catalyzes the formation of sulfite from phosphoadenosine 5'-phosphosulfate (PAPS) using thioredoxin as an electron donor. This chain is Phosphoadenosine 5'-phosphosulfate reductase, found in Escherichia coli (strain K12 / MC4100 / BW2952).